Here is a 246-residue protein sequence, read N- to C-terminus: Phycocyanobilin:ferredoxin oxidoreductase (246 aa).

It belongs to the HY2 family.

It catalyses the reaction (2R,3Z)-phycocyanobilin + 4 oxidized [2Fe-2S]-[ferredoxin] = biliverdin IXalpha + 4 reduced [2Fe-2S]-[ferredoxin] + 4 H(+). Functionally, catalyzes the four-electron reduction of biliverdin IX-alpha (2-electron reduction at both the A and D rings); the reaction proceeds via an isolatable 2-electron intermediate, 181,182-dihydrobiliverdin. The sequence is that of Phycocyanobilin:ferredoxin oxidoreductase from Crocosphaera subtropica (strain ATCC 51142 / BH68) (Cyanothece sp. (strain ATCC 51142)).